Here is a 686-residue protein sequence, read N- to C-terminus: Methionine--tRNA ligase (686 aa).

The short motif at 15-25 (PYANGSIHLGH) is the 'HIGH' region element. Residues cysteine 146, cysteine 149, cysteine 159, and cysteine 162 each contribute to the Zn(2+) site. The short motif at 332-336 (KMSKS) is the 'KMSKS' region element. Residue lysine 335 participates in ATP binding. The tRNA-binding domain maps to 585–686 (AFEAVDMRIA…EGAQPGMRVM (102 aa)).

Belongs to the class-I aminoacyl-tRNA synthetase family. MetG type 1 subfamily. In terms of assembly, homodimer. Requires Zn(2+) as cofactor.

The protein resides in the cytoplasm. It catalyses the reaction tRNA(Met) + L-methionine + ATP = L-methionyl-tRNA(Met) + AMP + diphosphate. In terms of biological role, is required not only for elongation of protein synthesis but also for the initiation of all mRNA translation through initiator tRNA(fMet) aminoacylation. This Aliivibrio fischeri (strain ATCC 700601 / ES114) (Vibrio fischeri) protein is Methionine--tRNA ligase.